A 1091-amino-acid chain; its full sequence is Rho GTPase-activating protein 7 (1091 aa).

The SAM domain occupies 11-78 (LTQIEAKEAC…LNKCAVMKLE (68 aa)). Phosphoserine is present on residues S86, S89, and S129. 4 disordered regions span residues 120 to 181 (SPKQ…TTPR), 296 to 329 (RSVSNSTQTSSSSSQSETSSAVSTPSPVTRTRSL), 402 to 439 (RTGSFHGPGHLSLRRENSSDSPKELKRRNSSSSVSSRM), and 491 to 552 (SDEG…SGVG). The segment covering 130 to 143 (PDNSRLQSATSRES) has biased composition (polar residues). Composition is skewed to low complexity over residues 155-166 (SSIRSLSSTSSS) and 298-324 (VSNSTQTSSSSSQSETSSAVSTPSPVT). Residues 274-447 (QLNCVEISAL…RMSIYDNVPG (174 aa)) form a focal adhesion-targeting (FAT) region. Residue S321 is modified to Phosphoserine. The span at 414–425 (LRRENSSDSPKE) shows a compositional bias: basic and acidic residues. Over residues 499–511 (ALDSVSPCPSSPK) the composition is skewed to polar residues. Over residues 513–525 (IHLDVDHDRRTPS) the composition is skewed to basic and acidic residues. The segment covering 526-535 (DLDSTGNSLN) has biased composition (polar residues). A polybasic cluster (PBR) region spans residues 614 to 636 (KHGFSWAVPKFMKRIKVPDYKDR). The 207-residue stretch at 641–847 (VPLTVNVQRS…HMIAECKKLF (207 aa)) folds into the Rho-GAP domain. The START domain maps to 877–1084 (SNDQPADYRH…RDSFSNQSTE (208 aa)).

In terms of assembly, interacts with EF1A1, facilitates EF1A1 distribution to the membrane periphery and ruffles upon growth factor stimulation and suppresses cell migration. Interacts with tensin TNS1 (via N-terminus); the interaction is decreased by phosphorylation of TNS1. Interacts with TNS3 and PTEN; in resting cells, interacts with TNS3 (via C2 tensin-type domain) but, following growth factor stimulation, TNS3 and PTEN are phosphorylated which leads to weakened interaction with TNS3 and enhanced interaction with PTEN. Interacts (via C-terminus) with tensin TNS4 (via SH2 domain); the interaction is independent of tyrosine phosphorylation of DLC1.

It localises to the cytoplasm. Its subcellular location is the cell junction. The protein localises to the focal adhesion. The protein resides in the membrane. Its function is as follows. Functions as a GTPase-activating protein for the small GTPases RHOA, RHOB, RHOC and CDC42, terminating their downstream signaling. This induces morphological changes and detachment through cytoskeletal reorganization, playing a critical role in biological processes such as cell migration and proliferation. Also functions in vivo as an activator of the phospholipase PLCD1. Active DLC1 increases cell migration velocity but reduces directionality. Required for growth factor-induced epithelial cell migration; in resting cells, interacts with TNS3 while PTEN interacts with the p85 regulatory subunit of the PI3K kinase complex but growth factor stimulation induces phosphorylation of TNS3 and PTEN, causing them to change their binding preference so that PTEN interacts with DLC1 and TNS3 interacts with p85. The PTEN-DLC1 complex translocates to the posterior of migrating cells to activate RHOA while the TNS3-p85 complex translocates to the leading edge of migrating cells to promote RAC1 activation. The polypeptide is Rho GTPase-activating protein 7 (Dlc1) (Rattus norvegicus (Rat)).